The chain runs to 904 residues: E3 ubiquitin-protein ligase HACE1 (904 aa).

ANK repeat units lie at residues 34-63 (AVYTLMPMVMADQHRSVSELLLNSKFDVNY), 68-97 (VKRSLLHIAANCGSVECLVLLLKRGANPNY), 101-130 (SGCTPLHLAARNGQKKCMGRLLEYNADVNI), 134-163 (EGLTAIHWLAVNGRTELLHDLVQHVTNVDV), 167-196 (MGQTALHVACQNGHKTTVQCLLDSGADINR), 200-230 (SGATPLYFACSHGQRDTAQILLLRGAKYLPD), and 232-261 (NGVTPLDLCVQGGYGETCEILIQHHGRLFQ). Positions 569–904 (SNEKLKQGIA…HCGSYGYTMA (336 aa)) constitute an HECT domain. The Glycyl thioester intermediate role is filled by cysteine 871.

It is found in the golgi apparatus. Its subcellular location is the golgi stack membrane. The protein localises to the cytoplasm. It localises to the endoplasmic reticulum. It catalyses the reaction S-ubiquitinyl-[E2 ubiquitin-conjugating enzyme]-L-cysteine + [acceptor protein]-L-lysine = [E2 ubiquitin-conjugating enzyme]-L-cysteine + N(6)-ubiquitinyl-[acceptor protein]-L-lysine.. The protein operates within protein modification; protein ubiquitination. E3 ubiquitin-protein ligase involved in Golgi membrane fusion and regulation of small GTPases. Acts as a regulator of Golgi membrane dynamics during the cell cycle: recruited to Golgi membrane by Rab proteins and regulates postmitotic Golgi membrane fusion. Acts by mediating ubiquitination during mitotic Golgi disassembly, ubiquitination serving as a signal for Golgi reassembly later, after cell division. The sequence is that of E3 ubiquitin-protein ligase HACE1 (hace1) from Danio rerio (Zebrafish).